A 327-amino-acid chain; its full sequence is AA9 family lytic polysaccharide monooxygenase B (327 aa).

The first 19 residues, M1–A19, serve as a signal peptide directing secretion. Cu(2+) is bound by residues H20 and H98. C68 and C192 are disulfide-bonded. Residues H178 and Q187 each contribute to the O2 site. Y189 lines the Cu(2+) pocket. The segment covering S264 to P280 has biased composition (low complexity). The interval S264 to G284 is disordered. The 37-residue stretch at C291–V327 folds into the CBM1 domain. N-linked (GlcNAc...) asparagine glycosylation is present at N317.

The protein belongs to the polysaccharide monooxygenase AA9 family. Cu(2+) is required as a cofactor.

The protein resides in the secreted. It catalyses the reaction [(1-&gt;4)-beta-D-glucosyl]n+m + reduced acceptor + O2 = 4-dehydro-beta-D-glucosyl-[(1-&gt;4)-beta-D-glucosyl]n-1 + [(1-&gt;4)-beta-D-glucosyl]m + acceptor + H2O.. Functionally, lytic polysaccharide monooxygenase (LPMO) that depolymerizes crystalline and amorphous polysaccharides via the oxidation of scissile alpha- or beta-(1-4)-glycosidic bonds, yielding C1 or C4 oxidation products. Catalysis by LPMOs requires the reduction of the active-site copper from Cu(II) to Cu(I) by a reducing agent and H(2)O(2) or O(2) as a cosubstrate. This chain is AA9 family lytic polysaccharide monooxygenase B (LPMO9B), found in Podospora anserina (strain S / ATCC MYA-4624 / DSM 980 / FGSC 10383) (Pleurage anserina).